Reading from the N-terminus, the 231-residue chain is uncharacterized protein (231 aa).

6 consecutive transmembrane segments (helical) span residues 4 to 24 (YIIY…LQIS), 29 to 49 (SMIF…LVIG), 58 to 78 (AGNA…ALPL), 95 to 115 (TVVI…LLLG), 147 to 167 (VTAV…YLVL), and 211 to 231 (LCGI…YFFV).

This sequence belongs to the YohK (E.coli)/YwbG (IPA-22R) (B.subtilis) family.

The protein localises to the cell membrane. This is an uncharacterized protein from Haemophilus influenzae (strain ATCC 51907 / DSM 11121 / KW20 / Rd).